Consider the following 220-residue polypeptide: Iron-sulfur cluster repair protein YtfE (220 aa).

The protein belongs to the RIC family. YtfE subfamily. As to quaternary structure, homodimer.

The protein localises to the cytoplasm. Di-iron-containing protein involved in the repair of iron-sulfur clusters damaged by oxidative and nitrosative stress conditions. This is Iron-sulfur cluster repair protein YtfE from Escherichia coli (strain SMS-3-5 / SECEC).